An 89-amino-acid chain; its full sequence is Small ribosomal subunit protein uS19 (89 aa).

Belongs to the universal ribosomal protein uS19 family.

In terms of biological role, protein S19 forms a complex with S13 that binds strongly to the 16S ribosomal RNA. This chain is Small ribosomal subunit protein uS19, found in Xylella fastidiosa (strain M12).